Here is a 1162-residue protein sequence, read N- to C-terminus: Spike glycoprotein (1162 aa).

The N-terminal stretch at 1-18 (MLVTPLLLVTLLCALCSA) is a signal peptide. The Extracellular portion of the chain corresponds to 19–1095 (VLYDSSSYVY…LKTYIKWPWY (1077 aa)). 21 N-linked (GlcNAc...) asparagine; by host glycosylation sites follow: Asn51, Asn77, Asn103, Asn144, Asn163, Asn178, Asn212, Asn237, Asn247, Asn264, Asn276, Asn306, Asn425, Asn447, Asn513, Asn530, Asn579, Asn591, Asn669, Asn676, and Asn714. The heptad repeat 1 (HR1) stretch occupies residues 769–874 (IPFATQLQAR…QVDRLITGRL (106 aa)). Positions 822–866 (QDVVSKQSAILTETMASLNKNFGAISSVIQEIYQQFDAIQANAQV) form a coiled coil. N-linked (GlcNAc...) asparagine; by host glycans are attached at residues Asn947, Asn960, Asn979, Asn1014, Asn1038, Asn1051, and Asn1074. The interval 1024 to 1105 (NDDFDFNDEL…VWLAIAFATI (82 aa)) is heptad repeat 2 (HR2). Positions 1055-1083 (PILDIDSEIDRIQGVIQGLNDSLIDLEKL) form a coiled coil. Residues 1096–1116 (VWLAIAFATIIFILILGWVFF) form a helical membrane-spanning segment. Topologically, residues 1117–1162 (MTGCCGCCCGCFGIMPLMSKCGKKSSYYTTFDNDVVTEQYRPKKSV) are cytoplasmic. The Di-lysine motif signature appears at 1159-1162 (KKSV).

This sequence belongs to the gammacoronaviruses spike protein family. As to quaternary structure, homotrimer; each monomer consists of a S1 and a S2 subunit. The resulting peplomers protrude from the virus surface as spikes. Specific enzymatic cleavages in vivo yield mature proteins. The precursor is processed into S1 and S2 by host cell furin or furin-like protease to yield the mature S1 and S2 proteins. The cleavage site between S1 and S2 requires the optimal sequence [KR]-X-[KR]-R. Additionally, a second cleavage leads to the release of a fusion peptide after viral attachment to host cell receptor.

It is found in the virion membrane. The protein localises to the host endoplasmic reticulum-Golgi intermediate compartment membrane. Functionally, attaches the virion to the host cell membrane by interacting with sialic acids, initiating the infection. Its function is as follows. Mediates fusion of the virion and cellular membranes by acting as a class I viral fusion protein. Under the current model, the protein has at least 3 conformational states: pre-fusion native state, pre-hairpin intermediate state, and post-fusion hairpin state. During viral and target cell membrane fusion, the coiled coil regions (heptad repeats) assume a trimer-of-hairpins structure, positioning the fusion peptide in close proximity to the C-terminal region of the ectodomain. The formation of this structure appears to drive apposition and subsequent fusion of viral and target cell membranes. In terms of biological role, acts as a viral fusion peptide after S2 cleavage occurring upon virus endocytosis. The chain is Spike glycoprotein from Avian infectious bronchitis virus (strain Beaudette) (IBV).